A 395-amino-acid polypeptide reads, in one-letter code: Ribose-phosphate pyrophosphokinase 2, chloroplastic (395 aa).

A compositionally biased stretch (low complexity) spans 1-23 (MASPAPRSLSSSSSSSSSSFCPS). Positions 1–33 (MASPAPRSLSSSSSSSSSSFCPSISPPPRSPSR) are disordered. The transit peptide at 1-42 (MASPAPRSLSSSSSSSSSSFCPSISPPPRSPSRASLPFSVKC) directs the protein to the chloroplast. Asp209, His211, Asp220, and Asp224 together coordinate Mg(2+). The tract at residues 295–310 (GKVAVMLDDMIDTAGT) is binding of phosphoribosylpyrophosphate.

Belongs to the ribose-phosphate pyrophosphokinase family.

It localises to the plastid. Its subcellular location is the chloroplast. The enzyme catalyses D-ribose 5-phosphate + ATP = 5-phospho-alpha-D-ribose 1-diphosphate + AMP + H(+). The polypeptide is Ribose-phosphate pyrophosphokinase 2, chloroplastic (PRS2) (Spinacia oleracea (Spinach)).